The chain runs to 328 residues: V-set and immunoglobulin domain-containing protein 2 (328 aa).

Positions 1-24 (MAWPLVGAFLCGHLLGFVCLSGLA) are cleaved as a signal peptide. One can recognise an Ig-like V-type domain in the interval 25 to 138 (VEVTVPTEPL…DFYTNGLGLI (114 aa)). Over 25–244 (VEVTVPTEPL…VTDSSEGRVA (220 aa)) the chain is Extracellular. Cys46 and Cys122 are disulfide-bonded. Asn139, Asn207, and Asn232 each carry an N-linked (GlcNAc...) asparagine glycan. Residues 145–234 (PPSHPLCSQS…GSASCELNLS (90 aa)) form the Ig-like C2-type domain. The cysteines at positions 167 and 218 are disulfide-linked. A helical membrane pass occupies residues 245–265 (GTLIGVLLGVLLLSVAAFCLI). At 266–328 (RFQKERKKEP…TTKSKLSMVV (63 aa)) the chain is on the cytoplasmic side.

In terms of tissue distribution, expressed in the stomach, colon and prostate.

Its subcellular location is the membrane. In Mus musculus (Mouse), this protein is V-set and immunoglobulin domain-containing protein 2 (Vsig2).